A 212-amino-acid polypeptide reads, in one-letter code: dITP/XTP pyrophosphatase (212 aa).

Residue 7–12 (SRNKKK) coordinates substrate. Asp-72 functions as the Proton acceptor in the catalytic mechanism. Asp-72 contributes to the Mg(2+) binding site. Residues Ser-73, 163 to 166 (FGYD), Lys-187, and 192 to 193 (HR) contribute to the substrate site. The segment at 164-194 (GYDPLFEPAEAPGQSSAELTPERKDELSHRG) is disordered. Residues 183–192 (TPERKDELSH) show a composition bias toward basic and acidic residues.

It belongs to the HAM1 NTPase family. In terms of assembly, homodimer. Requires Mg(2+) as cofactor.

The catalysed reaction is XTP + H2O = XMP + diphosphate + H(+). It carries out the reaction dITP + H2O = dIMP + diphosphate + H(+). The enzyme catalyses ITP + H2O = IMP + diphosphate + H(+). Its function is as follows. Pyrophosphatase that catalyzes the hydrolysis of nucleoside triphosphates to their monophosphate derivatives, with a high preference for the non-canonical purine nucleotides XTP (xanthosine triphosphate), dITP (deoxyinosine triphosphate) and ITP. Seems to function as a house-cleaning enzyme that removes non-canonical purine nucleotides from the nucleotide pool, thus preventing their incorporation into DNA/RNA and avoiding chromosomal lesions. This is dITP/XTP pyrophosphatase from Corynebacterium urealyticum (strain ATCC 43042 / DSM 7109).